Here is a 424-residue protein sequence, read N- to C-terminus: UDP-N-acetylglucosamine 1-carboxyvinyltransferase (424 aa).

22 to 23 contacts phosphoenolpyruvate; that stretch reads KN. A UDP-N-acetyl-alpha-D-glucosamine-binding site is contributed by arginine 93. Catalysis depends on cysteine 117, which acts as the Proton donor. Residue cysteine 117 is modified to 2-(S-cysteinyl)pyruvic acid O-phosphothioketal. UDP-N-acetyl-alpha-D-glucosamine is bound by residues 122-126, aspartate 307, and isoleucine 329; that span reads RPIDL.

Belongs to the EPSP synthase family. MurA subfamily.

Its subcellular location is the cytoplasm. It catalyses the reaction phosphoenolpyruvate + UDP-N-acetyl-alpha-D-glucosamine = UDP-N-acetyl-3-O-(1-carboxyvinyl)-alpha-D-glucosamine + phosphate. Its pathway is cell wall biogenesis; peptidoglycan biosynthesis. Its function is as follows. Cell wall formation. Adds enolpyruvyl to UDP-N-acetylglucosamine. This is UDP-N-acetylglucosamine 1-carboxyvinyltransferase from Chlorobium phaeovibrioides (strain DSM 265 / 1930) (Prosthecochloris vibrioformis (strain DSM 265)).